The primary structure comprises 897 residues: 3'-5' exonuclease DinG (897 aa).

In terms of domain architecture, Exonuclease spans 8–161; that stretch reads VVDLETTGNQ…DEDAATTAKL (154 aa). Residues 241–496 form the Helicase ATP-binding domain; the sequence is SKAVDQLGLT…KAIDQLEKQR (256 aa). Residue 276–283 coordinates ATP; sequence ASLGSGKS. Residues 448–451 carry the DEAH box motif; sequence DEAH. Residues 703-893 form the Helicase C-terminal domain; it reads NIDEYVASIV…QFGKLLRQIQ (191 aa).

This sequence belongs to the helicase family. DinG subfamily. Type 2 sub-subfamily. In terms of assembly, monomer in solution.

Its activity is regulated as follows. The nuclease activity is inhibited by ATP or ADP. In terms of biological role, 3'-5' exonuclease acting on single-stranded DNA (ssDNA) and RNA (ssRNA) substrates. Displays ssDNA-stimulated ATPase activity, but lacks helicase activity. This chain is 3'-5' exonuclease DinG, found in Staphylococcus aureus (strain MRSA252).